A 223-amino-acid chain; its full sequence is Small ribosomal subunit protein uS3 (223 aa).

A KH type-2 domain is found at 38-106; it reads IREFIAKQLT…RVHINIVEIK (69 aa).

It belongs to the universal ribosomal protein uS3 family. In terms of assembly, part of the 30S ribosomal subunit. Forms a tight complex with proteins S10 and S14.

Binds the lower part of the 30S subunit head. Binds mRNA in the 70S ribosome, positioning it for translation. In Pediococcus pentosaceus (strain ATCC 25745 / CCUG 21536 / LMG 10740 / 183-1w), this protein is Small ribosomal subunit protein uS3.